The chain runs to 90 residues: DNA-directed RNA polymerase subunit omega (90 aa).

Belongs to the RNA polymerase subunit omega family. As to quaternary structure, the RNAP catalytic core consists of 2 alpha, 1 beta, 1 beta' and 1 omega subunit. When a sigma factor is associated with the core the holoenzyme is formed, which can initiate transcription.

It carries out the reaction RNA(n) + a ribonucleoside 5'-triphosphate = RNA(n+1) + diphosphate. Its function is as follows. Promotes RNA polymerase assembly. Latches the N- and C-terminal regions of the beta' subunit thereby facilitating its interaction with the beta and alpha subunits. This Hamiltonella defensa subsp. Acyrthosiphon pisum (strain 5AT) protein is DNA-directed RNA polymerase subunit omega.